The following is a 199-amino-acid chain: Recombination protein RecR (199 aa).

Residues 57–72 form a C4-type zinc finger; that stretch reads CQQCRTFTEQNLCAIC. The Toprim domain occupies 81–176; that stretch reads GMICVVEMPV…KVSRIAHGVP (96 aa).

It belongs to the RecR family.

In terms of biological role, may play a role in DNA repair. It seems to be involved in an RecBC-independent recombinational process of DNA repair. It may act with RecF and RecO. This Psychromonas ingrahamii (strain DSM 17664 / CCUG 51855 / 37) protein is Recombination protein RecR.